The chain runs to 949 residues: uncharacterized protein (949 aa).

Residues 64 to 170 enclose the Calponin-homology (CH) domain; sequence LCSVHEAKKW…YCLHALSYLL (107 aa).

The protein resides in the nucleus. This is an uncharacterized protein from Schizosaccharomyces pombe (strain 972 / ATCC 24843) (Fission yeast).